A 262-amino-acid chain; its full sequence is 14-3-3 protein homolog (262 aa).

It belongs to the 14-3-3 family.

This Trichoderma harzianum (Hypocrea lixii) protein is 14-3-3 protein homolog.